A 269-amino-acid polypeptide reads, in one-letter code: Bis(5'-nucleosyl)-tetraphosphatase, symmetrical (269 aa).

This sequence belongs to the Ap4A hydrolase family.

It catalyses the reaction P(1),P(4)-bis(5'-adenosyl) tetraphosphate + H2O = 2 ADP + 2 H(+). Its function is as follows. Hydrolyzes diadenosine 5',5'''-P1,P4-tetraphosphate to yield ADP. This Vibrio vulnificus (strain YJ016) protein is Bis(5'-nucleosyl)-tetraphosphatase, symmetrical.